A 145-amino-acid chain; its full sequence is D-aminoacyl-tRNA deacylase (145 aa).

The Gly-cisPro motif, important for rejection of L-amino acids signature appears at 137 to 138 (GP).

Belongs to the DTD family. In terms of assembly, homodimer.

The protein resides in the cytoplasm. The catalysed reaction is glycyl-tRNA(Ala) + H2O = tRNA(Ala) + glycine + H(+). It carries out the reaction a D-aminoacyl-tRNA + H2O = a tRNA + a D-alpha-amino acid + H(+). In terms of biological role, an aminoacyl-tRNA editing enzyme that deacylates mischarged D-aminoacyl-tRNAs. Also deacylates mischarged glycyl-tRNA(Ala), protecting cells against glycine mischarging by AlaRS. Acts via tRNA-based rather than protein-based catalysis; rejects L-amino acids rather than detecting D-amino acids in the active site. By recycling D-aminoacyl-tRNA to D-amino acids and free tRNA molecules, this enzyme counteracts the toxicity associated with the formation of D-aminoacyl-tRNA entities in vivo and helps enforce protein L-homochirality. This chain is D-aminoacyl-tRNA deacylase, found in Klebsiella pneumoniae subsp. pneumoniae (strain ATCC 700721 / MGH 78578).